The sequence spans 1465 residues: DNA polymerase III PolC-type (1465 aa).

One can recognise an Exonuclease domain in the interval 427–583 (YVVFDVETTG…YDAEATGRLL (157 aa)).

The protein belongs to the DNA polymerase type-C family. PolC subfamily.

The protein resides in the cytoplasm. The enzyme catalyses DNA(n) + a 2'-deoxyribonucleoside 5'-triphosphate = DNA(n+1) + diphosphate. Functionally, required for replicative DNA synthesis. This DNA polymerase also exhibits 3' to 5' exonuclease activity. This chain is DNA polymerase III PolC-type, found in Streptococcus pyogenes serotype M18 (strain MGAS8232).